The sequence spans 130 residues: MATRHQARTAVVGLLYAYDLGNENIAKFSDEILEEDKIRNKQRDFSHDLFDGTIENLEMLDAEIEKHLTDWDYDAIGRVEKAILRLGAYEILVAKTDRAIIINEAVELAKSLADEKSPQFINGVLDAIGK.

The protein belongs to the NusB family.

Functionally, involved in transcription antitermination. Required for transcription of ribosomal RNA (rRNA) genes. Binds specifically to the boxA antiterminator sequence of the ribosomal RNA (rrn) operons. The chain is Transcription antitermination protein NusB from Sulfurovum sp. (strain NBC37-1).